A 163-amino-acid chain; its full sequence is MHRSHPSTTRRKHLIKEMMEDDYELPTEQQQIVRVVRSCGNNLHEVETATPESENFLVSMPNKYRKNMWVKRGDFLLVEPIEEGDKVKAEISKILTNDHVKEYTKAGIWPERFAKNPPQEAKAQNDDEDSDFEDDLTPNTNRPVQESDEEDEDTDTESSDEED.

Residues 18–96 enclose the S1-like domain; that stretch reads MMEDDYELPT…VKAEISKILT (79 aa). The segment at 106 to 163 is disordered; that stretch reads AGIWPERFAKNPPQEAKAQNDDEDSDFEDDLTPNTNRPVQESDEEDEDTDTESSDEED. 2 stretches are compositionally biased toward acidic residues: residues 126–136 and 146–163; these read DDEDSDFEDDL and ESDE…DEED.

The protein belongs to the EIF1AD family.

The polypeptide is Probable RNA-binding protein EIF1AD (Drosophila pseudoobscura pseudoobscura (Fruit fly)).